The chain runs to 173 residues: Alpha-crystallin A chain (173 aa).

N-acetylmethionine is present on Met-1. Residues 1 to 63 are required for complex formation with BFSP1 and BFSP2; that stretch reads MDIAIQHPWF…RTVLDSGISE (63 aa). A Deamidated glutamine; partial modification is found at Gln-6. Phosphoserine is present on Ser-45. At Gln-50 the chain carries Deamidated glutamine; partial. The sHSP domain maps to 52-162; that stretch reads LFRTVLDSGI…GHSERAIPVS (111 aa). Lys-70 bears the N6-acetyllysine mark. Gln-90 carries the post-translational modification Deamidated glutamine; partial. Lys-99 bears the N6-acetyllysine mark. His-100 lines the Zn(2+) pocket. Asn-101 is modified (deamidated asparagine; partial). Residues Glu-102 and His-107 each contribute to the Zn(2+) site. Ser-122 bears the Phosphoserine mark. Asn-123 carries the deamidated asparagine; partial modification. Residues 144–173 form a disordered region; sequence PKVPSGMDAGHSERAIPVSREEKPSSAPSS. Over residues 153–167 the composition is skewed to basic and acidic residues; the sequence is GHSERAIPVSREEKP. Residue His-154 coordinates Zn(2+). A glycan (O-linked (GlcNAc) serine) is linked at Ser-162.

Belongs to the small heat shock protein (HSP20) family. Heteromer composed of three CRYAA and one CRYAB subunits. Inter-subunit bridging via zinc ions enhances stability, which is crucial as there is no protein turn over in the lens. Can also form homodimers and homotetramers (dimers of dimers) which serve as the building blocks of homooligomers. Within homooligomers, the zinc-binding motif is created from residues of 3 different molecules. His-100 and Glu-102 from one molecule are ligands of the zinc ion, and His-107 and His-154 residues from additional molecules complete the site with tetrahedral coordination geometry. Part of a complex required for lens intermediate filament formation composed of BFSP1, BFSP2 and CRYAA. Acetylation at Lys-70 may increase chaperone activity. Post-translationally, undergoes age-dependent proteolytical cleavage at the C-terminus.

Its subcellular location is the cytoplasm. It is found in the nucleus. Its function is as follows. Contributes to the transparency and refractive index of the lens. Acts as a chaperone, preventing aggregation of various proteins under a wide range of stress conditions. Required for the correct formation of lens intermediate filaments as part of a complex composed of BFSP1, BFSP2 and CRYAA. The chain is Alpha-crystallin A chain (CRYAA) from Balaenoptera acutorostrata (Common minke whale).